Reading from the N-terminus, the 164-residue chain is Crossover junction endodeoxyribonuclease RuvC (164 aa).

Active-site residues include Asp-7, Glu-67, and Asp-139. Mg(2+)-binding residues include Asp-7, Glu-67, and Asp-139.

Belongs to the RuvC family. In terms of assembly, homodimer which binds Holliday junction (HJ) DNA. The HJ becomes 2-fold symmetrical on binding to RuvC with unstacked arms; it has a different conformation from HJ DNA in complex with RuvA. In the full resolvosome a probable DNA-RuvA(4)-RuvB(12)-RuvC(2) complex forms which resolves the HJ. It depends on Mg(2+) as a cofactor.

It localises to the cytoplasm. The catalysed reaction is Endonucleolytic cleavage at a junction such as a reciprocal single-stranded crossover between two homologous DNA duplexes (Holliday junction).. Its function is as follows. The RuvA-RuvB-RuvC complex processes Holliday junction (HJ) DNA during genetic recombination and DNA repair. Endonuclease that resolves HJ intermediates. Cleaves cruciform DNA by making single-stranded nicks across the HJ at symmetrical positions within the homologous arms, yielding a 5'-phosphate and a 3'-hydroxyl group; requires a central core of homology in the junction. The consensus cleavage sequence is 5'-(A/T)TT(C/G)-3'. Cleavage occurs on the 3'-side of the TT dinucleotide at the point of strand exchange. HJ branch migration catalyzed by RuvA-RuvB allows RuvC to scan DNA until it finds its consensus sequence, where it cleaves and resolves the cruciform DNA. The chain is Crossover junction endodeoxyribonuclease RuvC from Geobacter sulfurreducens (strain ATCC 51573 / DSM 12127 / PCA).